We begin with the raw amino-acid sequence, 321 residues long: Peptide transport system permease protein SapB (321 aa).

Transmembrane regions (helical) follow at residues 8 to 28, 41 to 61, 82 to 102, 117 to 137, 150 to 170, 180 to 200, 249 to 269, and 289 to 309; these read HILW…VILL, IYIG…GITY, CFIT…ISAV, YVGL…VAAL, LLYE…FMEV, ILQH…MEII, VFTL…WPGI, and VIVI…FTFI. The 229-residue stretch at 75 to 303 folds into the ABC transmembrane type-1 domain; it reads LPPTLELCFI…VCIILIDTFT (229 aa).

It belongs to the binding-protein-dependent transport system permease family. OppBC subfamily.

The protein resides in the cell inner membrane. Functionally, involved in a peptide intake transport system that plays a role in the resistance to antimicrobial peptides. The sequence is that of Peptide transport system permease protein SapB (sapB) from Haemophilus influenzae (strain ATCC 51907 / DSM 11121 / KW20 / Rd).